The sequence spans 552 residues: Non-structural protein NS1 (552 aa).

The protein belongs to the orbivirus non-structural protein NS1 family.

The sequence is that of Non-structural protein NS1 (Segment-5) from Antilocapra americana (Pronghorn).